Here is a 314-residue protein sequence, read N- to C-terminus: Ribosomal RNA small subunit methyltransferase H (314 aa).

S-adenosyl-L-methionine is bound by residues 37 to 39 (GGH), aspartate 56, phenylalanine 86, aspartate 108, and histidine 115.

Belongs to the methyltransferase superfamily. RsmH family.

The protein resides in the cytoplasm. It carries out the reaction cytidine(1402) in 16S rRNA + S-adenosyl-L-methionine = N(4)-methylcytidine(1402) in 16S rRNA + S-adenosyl-L-homocysteine + H(+). In terms of biological role, specifically methylates the N4 position of cytidine in position 1402 (C1402) of 16S rRNA. The chain is Ribosomal RNA small subunit methyltransferase H from Leptospira biflexa serovar Patoc (strain Patoc 1 / ATCC 23582 / Paris).